The following is a 714-amino-acid chain: Macrophage-expressed gene 1 protein (714 aa).

The first 19 residues, 1 to 19 (MNSFMAIALIWMMIACAEA), serve as a signal peptide directing secretion. An MACPF domain is found at 30–345 (GFQTCKDTLK…TAVRHYYTFN (316 aa)). C34 and C70 are joined by a disulfide. Beta stranded transmembrane passes span 113 to 120 (FSINTELS) and 127 to 132 (GKFSTE). N185 carries N-linked (GlcNAc...) asparagine glycosylation. 2 beta stranded membrane-spanning segments follow: residues 235–244 (TVTASAGIAF) and 248–256 (VNFKVETDH). N269 carries an N-linked (GlcNAc...) asparagine glycan. The cysteines at positions 350 and 369 are disulfide-linked. N-linked (GlcNAc...) asparagine glycosylation occurs at N375. 5 disulfide bridges follow: C385-C394, C432-C446, C436-C442, C531-C569, and C554-C574. Residues 410-653 (PSGYTPVHLL…GDGNGMSGGE (244 aa)) are P2. The chain crosses the membrane as a helical span at residues 654 to 674 (AAGVTLGVIIALGIVITLAIY). The tract at residues 690 to 714 (EQESLVGSFATDASPPNGEQDPCPA) is disordered.

The protein belongs to the MPEG1 family. In terms of assembly, homooligomer; predominantly forms a homooligomeric arc-shaped pore complex instead of complete rings of 16 subunits. Proteolytically processed in two steps to generate the Macrophage-expressed gene 1 protein, processed form: cleaved by trypsin in proximity of the helical transmembrane domain releases the ectodomain into the lysosomal lumen to orient the pore-forming domain toward the endogenous membranes, and processed by the asparagine endopeptidase (LGMN). Proteolytic processing in antigen-containing vesicles is pH-dependent. Post-translationally, monoubiquitinated in response to bacterial infection; ubiquitination is required for vesicular localization and antibacterial activity and can be blocked by bacterial cell cycle inhibiting factor (cif).

It localises to the cytoplasmic vesicle membrane. Its subcellular location is the cytoplasmic vesicle. The protein resides in the phagosome membrane. With respect to regulation, forms arc- and ring-shaped pre-pores on top of the membrane at neutral to slightly acidic pH conditions and converts to pores upon acidification. Undergoes transition from the pre-pore to the pore in a processive clockwise hand-over-hand process. In the pore state, 2 alpha-helical regions refold into transmembrane hairpins (TMH1 and TMH2) in each protomer that form in the ensemble complex giant beta-barrel transmembrane pores. Its function is as follows. Pore-forming protein involved in both innate and adaptive immunity. Plays a central role in antigen cross-presentation in dendritic cells by forming a pore in antigen-containing compartments, thereby promoting delivery of antigens for cross-presentation. Also involved in innate immune response following bacterial infection; shows antibacterial activity against a wide spectrum of Gram-positive, Gram-negative and acid-fast bacteria. Reduces the viability of the intracytosolic pathogen L.monocytogenes by inhibiting acidification of the phagocytic vacuole of host cells which restricts bacterial translocation from the vacuole to the cytosol. Required for the antibacterial activity of reactive oxygen species and nitric oxide. Pore-forming protein that plays a central role in antigen cross-presentation in dendritic cells by mediating delivery of antigens for cross-presentation. Dendritic cells bridge innate and adaptive immunity by capturing exogenous antigens on MHC class-I molecules and presenting them to naive CD8(+) T-cells. Acts by forming a pore in antigen-containing compartments, promoting the release of antigens into the cytosol, enabling generation of MHCI:peptide complexes and T-cell priming. This is Macrophage-expressed gene 1 protein (Mpeg1) from Rattus norvegicus (Rat).